A 352-amino-acid polypeptide reads, in one-letter code: Holliday junction branch migration complex subunit RuvB (352 aa).

The large ATPase domain (RuvB-L) stretch occupies residues 5-191 (TDDFSEQRVI…FGIVARLEFY (187 aa)). ATP contacts are provided by residues Leu-30, Arg-31, Gly-72, Lys-75, Thr-76, Thr-77, 138–140 (EDY), Arg-181, Tyr-191, and Arg-228. Thr-76 contacts Mg(2+). The small ATPAse domain (RuvB-S) stretch occupies residues 192-262 (TPLELTRIVT…MADAALVMLD (71 aa)). A head domain (RuvB-H) region spans residues 265-352 (PVGFDVMDRK…GPNGELWGGQ (88 aa)). Residues Arg-301, Arg-320, and Arg-325 each coordinate DNA.

This sequence belongs to the RuvB family. As to quaternary structure, homohexamer. Forms an RuvA(8)-RuvB(12)-Holliday junction (HJ) complex. HJ DNA is sandwiched between 2 RuvA tetramers; dsDNA enters through RuvA and exits via RuvB. An RuvB hexamer assembles on each DNA strand where it exits the tetramer. Each RuvB hexamer is contacted by two RuvA subunits (via domain III) on 2 adjacent RuvB subunits; this complex drives branch migration. In the full resolvosome a probable DNA-RuvA(4)-RuvB(12)-RuvC(2) complex forms which resolves the HJ.

It is found in the cytoplasm. The enzyme catalyses ATP + H2O = ADP + phosphate + H(+). The RuvA-RuvB-RuvC complex processes Holliday junction (HJ) DNA during genetic recombination and DNA repair, while the RuvA-RuvB complex plays an important role in the rescue of blocked DNA replication forks via replication fork reversal (RFR). RuvA specifically binds to HJ cruciform DNA, conferring on it an open structure. The RuvB hexamer acts as an ATP-dependent pump, pulling dsDNA into and through the RuvAB complex. RuvB forms 2 homohexamers on either side of HJ DNA bound by 1 or 2 RuvA tetramers; 4 subunits per hexamer contact DNA at a time. Coordinated motions by a converter formed by DNA-disengaged RuvB subunits stimulates ATP hydrolysis and nucleotide exchange. Immobilization of the converter enables RuvB to convert the ATP-contained energy into a lever motion, pulling 2 nucleotides of DNA out of the RuvA tetramer per ATP hydrolyzed, thus driving DNA branch migration. The RuvB motors rotate together with the DNA substrate, which together with the progressing nucleotide cycle form the mechanistic basis for DNA recombination by continuous HJ branch migration. Branch migration allows RuvC to scan DNA until it finds its consensus sequence, where it cleaves and resolves cruciform DNA. The protein is Holliday junction branch migration complex subunit RuvB of Herminiimonas arsenicoxydans.